Reading from the N-terminus, the 158-residue chain is Transcription elongation factor GreB (158 aa).

Residues 53–75 (KRRLREIDRRVRFLTKRLEVLQI) are a coiled coil.

Belongs to the GreA/GreB family. GreB subfamily.

In terms of biological role, necessary for efficient RNA polymerase transcription elongation past template-encoded arresting sites. The arresting sites in DNA have the property of trapping a certain fraction of elongating RNA polymerases that pass through, resulting in locked ternary complexes. Cleavage of the nascent transcript by cleavage factors such as GreA or GreB allows the resumption of elongation from the new 3'terminus. GreB releases sequences of up to 9 nucleotides in length. The protein is Transcription elongation factor GreB of Pasteurella multocida (strain Pm70).